We begin with the raw amino-acid sequence, 157 residues long: Cyclic pyranopterin monophosphate synthase (157 aa).

Substrate contacts are provided by residues 75–77 (LCH) and 111–112 (ME). The active site involves Asp126.

It belongs to the MoaC family. In terms of assembly, homohexamer; trimer of dimers.

It carries out the reaction (8S)-3',8-cyclo-7,8-dihydroguanosine 5'-triphosphate = cyclic pyranopterin phosphate + diphosphate. Its pathway is cofactor biosynthesis; molybdopterin biosynthesis. Functionally, catalyzes the conversion of (8S)-3',8-cyclo-7,8-dihydroguanosine 5'-triphosphate to cyclic pyranopterin monophosphate (cPMP). In Novosphingobium aromaticivorans (strain ATCC 700278 / DSM 12444 / CCUG 56034 / CIP 105152 / NBRC 16084 / F199), this protein is Cyclic pyranopterin monophosphate synthase.